A 755-amino-acid polypeptide reads, in one-letter code: 3-isopropylmalate dehydratase (755 aa).

[4Fe-4S] cluster is bound by residues cysteine 353, cysteine 413, and cysteine 416. 3 disordered regions span residues 427-446 (GERC…GAGG), 471-493 (LTPA…ELEP), and 510-529 (DAPA…AAGM). Residues 510-528 (DAPATGASPPSPAPSDAAG) show a composition bias toward low complexity.

The protein belongs to the aconitase/IPM isomerase family. In terms of assembly, monomer. [4Fe-4S] cluster is required as a cofactor.

The catalysed reaction is (2R,3S)-3-isopropylmalate = (2S)-2-isopropylmalate. It functions in the pathway amino-acid biosynthesis; L-leucine biosynthesis; L-leucine from 3-methyl-2-oxobutanoate: step 2/4. In terms of biological role, catalyzes the isomerization between 2-isopropylmalate and 3-isopropylmalate, via the formation of 2-isopropylmaleate. The polypeptide is 3-isopropylmalate dehydratase (LEUA) (Rhizomucor pusillus).